Reading from the N-terminus, the 123-residue chain is uncharacterized protein (123 aa).

Residues G5–Y25 form a helical membrane-spanning segment.

The protein belongs to the asfivirus CP123L family.

It localises to the host membrane. Its subcellular location is the virion. This is an uncharacterized protein from Ornithodoros (relapsing fever ticks).